Consider the following 383-residue polypeptide: Aquaporin-5 (383 aa).

Over 1–46 (MSVTTLNGQPTLNISGPGQTALSRLDPLKKVFTKFFSSIPQKVRGH) the chain is Cytoplasmic. Residues 47 to 67 (VVAVIGELIGTTAFLFIAFSA) traverse the membrane as a helical segment. The Extracellular portion of the chain corresponds to 68-93 (AEVALASANDNKGDKVSYETKSISTT). A helical transmembrane segment spans residues 94-114 (QILFIAFGAGISLVVNAWTFF). Arg115 is a topological domain (cytoplasmic). Residues 116–136 (ISGGLFDPAVSIALFFVGAID) form a helical membrane-spanning segment. Residues 122 to 124 (DPA) carry the NPA 1 motif. At 137–140 (LTRC) the chain is on the extracellular side. The helical transmembrane segment at 141 to 161 (VLLCIAQCLGAIAASAMAYGL) threads the bilayer. Residues 162–180 (YHGGLHTATTLKPGMSPAQ) lie on the Cytoplasmic side of the membrane. Residues 181 to 201 (GVIVEMILTCQLCFTVLMLAA) traverse the membrane as a helical segment. Over 202-207 (EKHEAT) the chain is Extracellular. The helical transmembrane segment at 208 to 228 (FLAPLGIGLSVFIGELAGVFW) threads the bilayer. The Cytoplasmic segment spans residues 229–252 (TGGSMNPARSLGPAVVTLSFPSYH). The short motif at 234 to 236 (NPA) is the NPA 2 element. Residues 253–273 (WIYWVGPIAGAGLASIIYKLI) form a helical membrane-spanning segment. Over 274 to 383 (KALEYETAQL…DGFFGEMYAD (110 aa)) the chain is Extracellular. Over residues 332-349 (ARKSSSLVPTKSTKSGNS) the composition is skewed to polar residues. The segment at 332 to 383 (ARKSSSLVPTKSTKSGNSEVKKTETVVEEPAKTQPKPAPAADDGFFGEMYAD) is disordered. A compositionally biased stretch (basic and acidic residues) spans 350–362 (EVKKTETVVEEPA). Over residues 363 to 372 (KTQPKPAPAA) the composition is skewed to low complexity.

Belongs to the MIP/aquaporin (TC 1.A.8) family.

It is found in the membrane. The catalysed reaction is H2O(in) = H2O(out). Its function is as follows. Water channel required to facilitate the transport of water across membranes. May play a role in the vegetative growth. This is Aquaporin-5 from Botryotinia fuckeliana (strain B05.10) (Noble rot fungus).